The following is a 215-amino-acid chain: A-type ATP synthase subunit E (215 aa).

This sequence belongs to the V-ATPase E subunit family. Has multiple subunits with at least A(3), B(3), C, D, E, F, H, I and proteolipid K(x).

The protein localises to the cell membrane. Component of the A-type ATP synthase that produces ATP from ADP in the presence of a proton gradient across the membrane. This is A-type ATP synthase subunit E from Thermofilum pendens (strain DSM 2475 / Hrk 5).